A 98-amino-acid polypeptide reads, in one-letter code: HIG1 domain family member 1B (98 aa).

At 1 to 28 (MSANKGWWVPPEGEDNLSKKFLRKTRES) the chain is on the cytoplasmic side. The region spanning 1–94 (MSANKGWWVP…YRDYIKRVSE (94 aa)) is the HIG1 domain. A helical transmembrane segment spans residues 29–46 (PLVPIGVAGCLVIAAYRI). Residues 47–60 (YRLKARGSTKLSIH) are Extracellular-facing. Residues 61 to 83 (LIHTRVAAQACAVGAIMLGAMYT) form a helical membrane-spanning segment. Residues 84–98 (MYRDYIKRVSEDAEK) are Cytoplasmic-facing.

It is found in the membrane. The sequence is that of HIG1 domain family member 1B (Higd1b) from Mus musculus (Mouse).